Here is a 146-residue protein sequence, read N- to C-terminus: Transcriptional regulator MraZ (146 aa).

SpoVT-AbrB domains lie at 4–46 and 75–118; these read TVFR…SQTE and TVKV…PEQR.

It belongs to the MraZ family. As to quaternary structure, forms oligomers.

The protein resides in the cytoplasm. It localises to the nucleoid. This is Transcriptional regulator MraZ from Mesomycoplasma hyopneumoniae (strain 232) (Mycoplasma hyopneumoniae).